The chain runs to 413 residues: Putative tRNA pseudouridine synthase C16C4.06c (413 aa).

Asp-96 serves as the catalytic Nucleophile. Residue Tyr-154 coordinates substrate.

This sequence belongs to the tRNA pseudouridine synthase TruA family.

The protein resides in the cytoplasm. It localises to the nucleus. It carries out the reaction a uridine in tRNA = a pseudouridine in tRNA. The chain is Putative tRNA pseudouridine synthase C16C4.06c from Schizosaccharomyces pombe (strain 972 / ATCC 24843) (Fission yeast).